Reading from the N-terminus, the 141-residue chain is Calcium-binding protein SPEC 2D (141 aa).

4 EF-hand domains span residues 10 to 42 (DQIKEYKTKFDAFDRNNDGNFPTMFLGNAMKSV), 43 to 72 (GHVLTAAELENSRRVRKGTTTFPQFLAMIL), 73 to 107 (DKKCRKVFKAMDKDDKDKLLSADEVRQAMLSFDRQ), and 108 to 141 (ITEDKIKEMIEKADFPNDGKCSLEEFVKMVMNFC). The Ca(2+) site is built by D23, N25, D27, and N29. Residues D84, D86, K90, D95, D121, D125, K127, and E132 each coordinate Ca(2+).

Found in cell lineages giving rise to the aboral ectoderm, a squamous epithelium covering the surface of the late stage embryo and larva.

Functionally, calcium-binding protein involved in larval development and metamorphosis. Likely to function as calcium buffers mediating the transport of calcium from the sea water to the blastocoel where calcium is required for skeleton formation. The polypeptide is Calcium-binding protein SPEC 2D (SPEC2D) (Strongylocentrotus purpuratus (Purple sea urchin)).